A 218-amino-acid chain; its full sequence is MGQKINPLGFRLGTTQGHHSLWFSQPKNYSEGLQEDQKIRDCIKNYVQKNMRTSSGVEGIARIEIQKRIDLIQVIIFMGFPKLLIESRPRGIEELQTTLQKEFHCVNRKLNIAVTRIAKPYGNPNILAEFIAGQLKNRVSFRKAMKKAIELTEQADTKGIQIQIAGRIDGKEIARVEWIREGRVPLQTIRAKIDYCSYTVRTIYGVLGIKIWIFLDEE.

The 72-residue stretch at 47–118 folds into the KH type-2 domain; it reads VQKNMRTSSG…KLNIAVTRIA (72 aa).

The protein belongs to the universal ribosomal protein uS3 family. Part of the 30S ribosomal subunit.

It is found in the plastid. The protein localises to the chloroplast. This Nicotiana sylvestris (Wood tobacco) protein is Small ribosomal subunit protein uS3c (rps3).